The following is a 376-amino-acid chain: 3-dehydroquinate synthase (376 aa).

Residues 115–119 (GVIGD), 139–140 (TS), lysine 152, and lysine 161 contribute to the NAD(+) site. Zn(2+) contacts are provided by glutamate 194, histidine 256, and histidine 275.

Belongs to the sugar phosphate cyclases superfamily. Dehydroquinate synthase family. Requires Co(2+) as cofactor. The cofactor is Zn(2+). NAD(+) serves as cofactor.

It is found in the cytoplasm. It carries out the reaction 7-phospho-2-dehydro-3-deoxy-D-arabino-heptonate = 3-dehydroquinate + phosphate. It participates in metabolic intermediate biosynthesis; chorismate biosynthesis; chorismate from D-erythrose 4-phosphate and phosphoenolpyruvate: step 2/7. Functionally, catalyzes the conversion of 3-deoxy-D-arabino-heptulosonate 7-phosphate (DAHP) to dehydroquinate (DHQ). This chain is 3-dehydroquinate synthase, found in Rhizobium etli (strain CIAT 652).